Here is a 414-residue protein sequence, read N- to C-terminus: Histidine--tRNA ligase (414 aa).

This sequence belongs to the class-II aminoacyl-tRNA synthetase family. In terms of assembly, homodimer.

The protein localises to the cytoplasm. It carries out the reaction tRNA(His) + L-histidine + ATP = L-histidyl-tRNA(His) + AMP + diphosphate + H(+). This is Histidine--tRNA ligase from Endomicrobium trichonymphae.